A 244-amino-acid chain; its full sequence is 5-oxoprolinase subunit A (244 aa).

Belongs to the LamB/PxpA family. In terms of assembly, forms a complex composed of PxpA, PxpB and PxpC.

It catalyses the reaction 5-oxo-L-proline + ATP + 2 H2O = L-glutamate + ADP + phosphate + H(+). In terms of biological role, catalyzes the cleavage of 5-oxoproline to form L-glutamate coupled to the hydrolysis of ATP to ADP and inorganic phosphate. This Escherichia coli (strain SE11) protein is 5-oxoprolinase subunit A.